The primary structure comprises 540 residues: (13S,14R)-13-O-acetyl-1-hydroxy-N-methylcanadine 8-hydroxylase CYP82X1 (540 aa).

Residues 15–35 traverse the membrane as a helical segment; it reads FSIILVTTVSIVLLYSVFFWV. Residue Cys-483 coordinates heme.

It belongs to the cytochrome P450 family. Requires heme as cofactor. In terms of tissue distribution, highly expressed in capsules. Expressed is stems.

Its subcellular location is the membrane. The enzyme catalyses (13S,14R)-13-O-acetyl-1-hydroxy-N-methylcanadine + reduced [NADPH--hemoprotein reductase] + O2 = (13S,14R)-13-O-acetyl-1,8-dihydroxy-N-methylcanadine + oxidized [NADPH--hemoprotein reductase] + H2O + H(+). The protein operates within alkaloid biosynthesis. Cytochrome P450 involved in the biosynthesis of the benzylisoquinoline alkaloid noscapine. Converts (13S,14R)-13-O-acetyl-1-hydroxy-N-methylcanadine to (13S,14R)-13-O-acetyl-1,8-dihydroxy-N-methylcanadine. The protein is (13S,14R)-13-O-acetyl-1-hydroxy-N-methylcanadine 8-hydroxylase CYP82X1 of Papaver somniferum (Opium poppy).